The primary structure comprises 293 residues: Bifunctional protein FolD (293 aa).

Residues 164 to 166, serine 193, and threonine 234 each bind NADP(+); that span reads GRS.

It belongs to the tetrahydrofolate dehydrogenase/cyclohydrolase family. As to quaternary structure, homodimer.

The catalysed reaction is (6R)-5,10-methylene-5,6,7,8-tetrahydrofolate + NADP(+) = (6R)-5,10-methenyltetrahydrofolate + NADPH. The enzyme catalyses (6R)-5,10-methenyltetrahydrofolate + H2O = (6R)-10-formyltetrahydrofolate + H(+). It functions in the pathway one-carbon metabolism; tetrahydrofolate interconversion. In terms of biological role, catalyzes the oxidation of 5,10-methylenetetrahydrofolate to 5,10-methenyltetrahydrofolate and then the hydrolysis of 5,10-methenyltetrahydrofolate to 10-formyltetrahydrofolate. The polypeptide is Bifunctional protein FolD (Bacteroides thetaiotaomicron (strain ATCC 29148 / DSM 2079 / JCM 5827 / CCUG 10774 / NCTC 10582 / VPI-5482 / E50)).